We begin with the raw amino-acid sequence, 434 residues long: UDP-glucose 6-dehydrogenase (434 aa).

NAD(+) is bound by residues 2–19 (NITF…GIIM), valine 11, aspartate 30, lysine 35, threonine 121, and glutamate 152. Residues 148–152 (EFLRE), lysine 204, asparagine 208, 249–253 (FLNAG), and glycine 257 each bind substrate. The active-site Nucleophile is the cysteine 260. Lysine 263 is an NAD(+) binding site. Lysine 321 lines the substrate pocket. Arginine 328 contacts NAD(+).

Belongs to the UDP-glucose/GDP-mannose dehydrogenase family.

It carries out the reaction UDP-alpha-D-glucose + 2 NAD(+) + H2O = UDP-alpha-D-glucuronate + 2 NADH + 3 H(+). Its pathway is nucleotide-sugar biosynthesis; UDP-alpha-D-glucuronate biosynthesis; UDP-alpha-D-glucuronate from UDP-alpha-D-glucose: step 1/1. This chain is UDP-glucose 6-dehydrogenase (udg), found in Rickettsia prowazekii (strain Madrid E).